Reading from the N-terminus, the 284-residue chain is Ribose-phosphate pyrophosphokinase 1 (284 aa).

34-36 provides a ligand contact to ATP; that stretch reads DGE. Mg(2+)-binding residues include H126 and D163. K186 is an active-site residue. D-ribose 5-phosphate-binding positions include R188, D211, and 215 to 219; that span reads STGGT.

This sequence belongs to the ribose-phosphate pyrophosphokinase family. Class III (archaeal) subfamily. Mg(2+) serves as cofactor.

The protein localises to the cytoplasm. The catalysed reaction is D-ribose 5-phosphate + ATP = 5-phospho-alpha-D-ribose 1-diphosphate + AMP + H(+). The protein operates within metabolic intermediate biosynthesis; 5-phospho-alpha-D-ribose 1-diphosphate biosynthesis; 5-phospho-alpha-D-ribose 1-diphosphate from D-ribose 5-phosphate (route I): step 1/1. Functionally, involved in the biosynthesis of the central metabolite phospho-alpha-D-ribosyl-1-pyrophosphate (PRPP) via the transfer of pyrophosphoryl group from ATP to 1-hydroxyl of ribose-5-phosphate (Rib-5-P). This Archaeoglobus fulgidus (strain ATCC 49558 / DSM 4304 / JCM 9628 / NBRC 100126 / VC-16) protein is Ribose-phosphate pyrophosphokinase 1.